The following is a 68-amino-acid chain: Large ribosomal subunit protein bL31 (68 aa).

Zn(2+) is bound by residues C16, C18, C36, and C39.

This sequence belongs to the bacterial ribosomal protein bL31 family. Type A subfamily. In terms of assembly, part of the 50S ribosomal subunit. Requires Zn(2+) as cofactor.

Binds the 23S rRNA. This is Large ribosomal subunit protein bL31 from Dictyoglomus thermophilum (strain ATCC 35947 / DSM 3960 / H-6-12).